The sequence spans 821 residues: MEYISKDIEKKWQNFWSENQSFEPSSSKTKEKKYILSMFPYPSGRIHMGHVRNYCIGDAFARHFRKSDFNVLHPIGWDSFGMPAENAAIKHKLHPKKWTYENIDYMRDELKSLGLSFSKNREFATSDELYTKWEQEFIIKMYEAGIIYRKSATVNWCPHDQTVLANEQLEEGCCWRCGTEVVQKEMPGYYIGITKYAQELLDDLEKLKEDWPSQVLTMQENWIGRSEGLEFKFDLSKESRAKLERAFTKYFVFTTRPDTIYGVSYSALAPEHPIVKYIVEKNLLPEKKIKAIKAMQKIPERDRATQEKEGIDLEIEVMHPLTGKTIPVWVANFVLSSYGGGAVMAVPAHDQRDFEFAKKYNLPIKQVIVGPDGIIENQTEAYTAEGRLIESENFTGVTNIEAKKAIIYHFEQNSFGIKKVNYKLRDWGVSRQRYWGAPIPFIHCEKCGLVPEKIENLPVALPEDVEITGEGNPLDTHPTWKHCTCPKCGEKATRETDTLDTFVQSSWYFLRYATDNKKWNEVGISKEDSDYWMDVDQYIGGIEHAILHLLYARFFTKVLRDLGYTNSSEPFKKLLTQGMVLKDGAKMSKSKGNVVDPDLIIDKYGADTARLFILFAAPPTKELEWNDSAVEGAFRFIKKFFERAENVNQNGLDNFKSIDHSALSKEEKEARKKVYEALLKSNEVFTKTYTFNTLIASCMEALNALQTQKNDSIWAEGYYILTNILEPIIPHACWELSKKLFDLKNFDGKIELKEEVFALESIILAVTVNGKKRCEIEVAPDTSKDEILVKAKIASAKWLENSEILKEIVVPNKLVNFVIKG.

Residues 40–50 (PYPSGRIHMGH) carry the 'HIGH' region motif. A 'KMSKS' region motif is present at residues 586–590 (KMSKS). Lys-589 serves as a coordination point for ATP.

It belongs to the class-I aminoacyl-tRNA synthetase family.

Its subcellular location is the cytoplasm. It carries out the reaction tRNA(Leu) + L-leucine + ATP = L-leucyl-tRNA(Leu) + AMP + diphosphate. In Aliarcobacter butzleri (strain RM4018) (Arcobacter butzleri), this protein is Leucine--tRNA ligase.